A 215-amino-acid polypeptide reads, in one-letter code: Probable transaldolase (215 aa).

Catalysis depends on K84, which acts as the Schiff-base intermediate with substrate.

It belongs to the transaldolase family. Type 3B subfamily.

The protein resides in the cytoplasm. The catalysed reaction is D-sedoheptulose 7-phosphate + D-glyceraldehyde 3-phosphate = D-erythrose 4-phosphate + beta-D-fructose 6-phosphate. It functions in the pathway carbohydrate degradation; pentose phosphate pathway; D-glyceraldehyde 3-phosphate and beta-D-fructose 6-phosphate from D-ribose 5-phosphate and D-xylulose 5-phosphate (non-oxidative stage): step 2/3. In terms of biological role, transaldolase is important for the balance of metabolites in the pentose-phosphate pathway. This Exiguobacterium sibiricum (strain DSM 17290 / CCUG 55495 / CIP 109462 / JCM 13490 / 255-15) protein is Probable transaldolase.